The primary structure comprises 302 residues: Glycine--tRNA ligase alpha subunit (302 aa).

The protein belongs to the class-II aminoacyl-tRNA synthetase family. As to quaternary structure, tetramer of two alpha and two beta subunits.

The protein resides in the cytoplasm. The catalysed reaction is tRNA(Gly) + glycine + ATP = glycyl-tRNA(Gly) + AMP + diphosphate. The sequence is that of Glycine--tRNA ligase alpha subunit from Xanthomonas campestris pv. campestris (strain 8004).